Reading from the N-terminus, the 296-residue chain is Glycine--tRNA ligase alpha subunit (296 aa).

It belongs to the class-II aminoacyl-tRNA synthetase family. As to quaternary structure, tetramer of two alpha and two beta subunits.

It localises to the cytoplasm. It carries out the reaction tRNA(Gly) + glycine + ATP = glycyl-tRNA(Gly) + AMP + diphosphate. In Maricaulis maris (strain MCS10) (Caulobacter maris), this protein is Glycine--tRNA ligase alpha subunit.